The sequence spans 500 residues: GTPase Der (500 aa).

EngA-type G domains follow at residues 3–166 and 211–384; these read PVVA…MEEL and IKLA…VSAT. GTP contacts are provided by residues 9-16, 56-60, 118-121, 217-224, 264-268, and 329-332; these read GRPNVGKS, DTGGI, NKID, DTAGV, and NKWD. The KH-like domain occupies 385-469; that stretch reads KRVGTSVLTR…PIRIQFQNSE (85 aa). A disordered region spans residues 481–500; the sequence is LSQERQRKRLVGAVKNRNKK. Basic residues predominate over residues 486–500; sequence QRKRLVGAVKNRNKK.

This sequence belongs to the TRAFAC class TrmE-Era-EngA-EngB-Septin-like GTPase superfamily. EngA (Der) GTPase family. In terms of assembly, associates with the 50S ribosomal subunit.

Functionally, GTPase that plays an essential role in the late steps of ribosome biogenesis. The chain is GTPase Der from Aliivibrio salmonicida (strain LFI1238) (Vibrio salmonicida (strain LFI1238)).